Here is a 428-residue protein sequence, read N- to C-terminus: Adenylosuccinate synthetase (428 aa).

GTP is bound by residues 12-18 (GDEGKGK) and 40-42 (GHT). The active-site Proton acceptor is Asp-13. The Mg(2+) site is built by Asp-13 and Gly-40. IMP-binding positions include 13–16 (DEGK), 38–41 (NAGH), Thr-127, Arg-141, Gln-222, Thr-237, and Arg-301. His-41 serves as the catalytic Proton donor. Position 297 to 303 (297 to 303 (TVTKRPR)) interacts with substrate. GTP-binding positions include Arg-303, 329–331 (CLD), and 411–413 (SVG).

This sequence belongs to the adenylosuccinate synthetase family. In terms of assembly, homodimer. Mg(2+) is required as a cofactor.

It is found in the cytoplasm. It catalyses the reaction IMP + L-aspartate + GTP = N(6)-(1,2-dicarboxyethyl)-AMP + GDP + phosphate + 2 H(+). Its pathway is purine metabolism; AMP biosynthesis via de novo pathway; AMP from IMP: step 1/2. Its function is as follows. Plays an important role in the de novo pathway of purine nucleotide biosynthesis. Catalyzes the first committed step in the biosynthesis of AMP from IMP. In Levilactobacillus brevis (strain ATCC 367 / BCRC 12310 / CIP 105137 / JCM 1170 / LMG 11437 / NCIMB 947 / NCTC 947) (Lactobacillus brevis), this protein is Adenylosuccinate synthetase.